Here is a 326-residue protein sequence, read N- to C-terminus: Putative ribose-phosphate pyrophosphokinase 2 (326 aa).

ATP-binding positions include 43 to 45 (DGE) and 102 to 103 (RQ). His136 is a Mg(2+) binding site. D-ribose 5-phosphate-binding positions include Asp226 and 230 to 234 (NTGKT).

Belongs to the ribose-phosphate pyrophosphokinase family. Class I subfamily. In terms of assembly, homohexamer. The cofactor is Mg(2+).

The protein resides in the cytoplasm. It catalyses the reaction D-ribose 5-phosphate + ATP = 5-phospho-alpha-D-ribose 1-diphosphate + AMP + H(+). The protein operates within metabolic intermediate biosynthesis; 5-phospho-alpha-D-ribose 1-diphosphate biosynthesis; 5-phospho-alpha-D-ribose 1-diphosphate from D-ribose 5-phosphate (route I): step 1/1. In terms of biological role, involved in the biosynthesis of the central metabolite phospho-alpha-D-ribosyl-1-pyrophosphate (PRPP) via the transfer of pyrophosphoryl group from ATP to 1-hydroxyl of ribose-5-phosphate (Rib-5-P). The polypeptide is Putative ribose-phosphate pyrophosphokinase 2 (Streptococcus mutans serotype c (strain ATCC 700610 / UA159)).